Here is a 500-residue protein sequence, read N- to C-terminus: NAD(P)H-quinone oxidoreductase chain 4, chloroplastic (500 aa).

14 helical membrane-spanning segments follow: residues 4–24 (FPWL…IFFL), 35–55 (YTIC…CYHF), 87–107 (LGPV…AWPV), 113–130 (LFHF…GSFS), 134–154 (LLLF…LLSM), 167–187 (FILY…GVGL), 207–227 (VALE…KLPI), 242–262 (HYST…YGLI), 272–292 (AHSI…IYAA), 305–325 (IAYS…SITD), 330–350 (GAIL…FLAG), 386–406 (LALP…GIIT), 416–436 (IAIT…LLSM), and 462–482 (LFVS…PDFV).

Belongs to the complex I subunit 4 family.

The protein localises to the plastid. It localises to the chloroplast thylakoid membrane. It carries out the reaction a plastoquinone + NADH + (n+1) H(+)(in) = a plastoquinol + NAD(+) + n H(+)(out). The catalysed reaction is a plastoquinone + NADPH + (n+1) H(+)(in) = a plastoquinol + NADP(+) + n H(+)(out). In Helianthus annuus (Common sunflower), this protein is NAD(P)H-quinone oxidoreductase chain 4, chloroplastic.